A 620-amino-acid polypeptide reads, in one-letter code: Glutathione-regulated potassium-efflux system protein KefC (620 aa).

A run of 12 helical transmembrane segments spans residues 4-24, 26-46, 54-74, 90-110, 114-134, 149-169, 178-198, 218-238, 270-290, 294-314, 327-347, and 359-379; these read HTLM…PIAV, LGLG…PWGL, SILH…GLEL, GALQ…FLGL, VAEL…MQAM, FAVL…IPLL, LGAF…VVLL, VFSA…EEVG, GLLL…GTLV, LRIL…LWLI, WFAV…GAAQ, and ALTL…VLLT. The region spanning 399 to 518 is the RCK N-terminal domain; the sequence is QPRVIVAGFG…AGVAMPERET (120 aa). A disordered region spans residues 599–620; the sequence is QGTAEGKHTGDIADEPQVKPST.

It belongs to the monovalent cation:proton antiporter 2 (CPA2) transporter (TC 2.A.37) family. KefC subfamily. Homodimer. Interacts with the regulatory subunit KefF.

The protein resides in the cell inner membrane. Pore-forming subunit of a potassium efflux system that confers protection against electrophiles. Catalyzes K(+)/H(+) antiport. This chain is Glutathione-regulated potassium-efflux system protein KefC, found in Salmonella arizonae (strain ATCC BAA-731 / CDC346-86 / RSK2980).